A 273-amino-acid chain; its full sequence is 2,3,4,5-tetrahydropyridine-2,6-dicarboxylate N-succinyltransferase (273 aa).

Residues arginine 104 and aspartate 141 each contribute to the substrate site.

This sequence belongs to the transferase hexapeptide repeat family. In terms of assembly, homotrimer.

It localises to the cytoplasm. It carries out the reaction (S)-2,3,4,5-tetrahydrodipicolinate + succinyl-CoA + H2O = (S)-2-succinylamino-6-oxoheptanedioate + CoA. It participates in amino-acid biosynthesis; L-lysine biosynthesis via DAP pathway; LL-2,6-diaminopimelate from (S)-tetrahydrodipicolinate (succinylase route): step 1/3. This Azoarcus sp. (strain BH72) protein is 2,3,4,5-tetrahydropyridine-2,6-dicarboxylate N-succinyltransferase.